Reading from the N-terminus, the 398-residue chain is MSLNSLDLPGKPEDTRVVVAMSGGVDSSVVAGILKREGYDVVGVTLQLYDHSAAVHRAGSCCAGQDIEDARRVSESLGIPHYVLDYEARFREAVIDPFANSYVSGETPIPCVSCNQTVKFADLLQTARDLGADALATGHYIRSRANGAHRALYRPVDTDRDQSYFLFATTQEQIDYLRFPLGHLPKAQVREIAEELGLTVAKKQDSQDICFVPQGKYSDIISRLKPEAANPGDIVHIDGRTLGRHDGIVHYTVGQRRGIGVATGEALYVVHLDAANARVIVGPREALETHKVFLRDVNWLGDTPIADLPKSGMEVFAKVRSTRPPRPAVLRHADGQTWVELVDGESGIAPGQACVLYSDDSNAARVFGGGFIGRSEREPQAEEMLRRLMANADKASAA.

ATP contacts are provided by residues 20–27 and Leu-46; that span reads AMSGGVDS. Residue Cys-114 is the Nucleophile of the active site. The cysteines at positions 114 and 210 are disulfide-linked. Gly-138 contributes to the ATP binding site. Residues 160–162 are interaction with tRNA; sequence RDQ. The active-site Cysteine persulfide intermediate is the Cys-210.

It belongs to the MnmA/TRMU family.

The protein localises to the cytoplasm. The enzyme catalyses S-sulfanyl-L-cysteinyl-[protein] + uridine(34) in tRNA + AH2 + ATP = 2-thiouridine(34) in tRNA + L-cysteinyl-[protein] + A + AMP + diphosphate + H(+). In terms of biological role, catalyzes the 2-thiolation of uridine at the wobble position (U34) of tRNA, leading to the formation of s(2)U34. The sequence is that of tRNA-specific 2-thiouridylase MnmA from Brucella suis (strain ATCC 23445 / NCTC 10510).